A 200-amino-acid chain; its full sequence is MQLNVNDAQAIEVSELTFGGEFNETLVHQAVVAYMAGGRQGSKQQKTRSDVRGGGKRPWRQKGTGRARAGTIRSPIWRGGGTTFAARPQDHSQKLNKKMYRAAMRSILAELVRTDRLVVVQDFAVETPKTKDLLGKLNNMSLTDVLIVSDAVDQNLYLAARNLPHVDVRDVQGSDPVSLIAYDKVLITVSAVKKFEELLG.

The tract at residues 38–68 (GRQGSKQQKTRSDVRGGGKRPWRQKGTGRAR) is disordered. Residues 54–65 (GGKRPWRQKGTG) are compositionally biased toward basic residues.

It belongs to the universal ribosomal protein uL4 family. Part of the 50S ribosomal subunit.

One of the primary rRNA binding proteins, this protein initially binds near the 5'-end of the 23S rRNA. It is important during the early stages of 50S assembly. It makes multiple contacts with different domains of the 23S rRNA in the assembled 50S subunit and ribosome. Functionally, forms part of the polypeptide exit tunnel. In Pseudomonas fluorescens (strain Pf0-1), this protein is Large ribosomal subunit protein uL4.